The sequence spans 699 residues: SPS-sensor serine protease component SSY5 (699 aa).

Disordered stretches follow at residues 1–113 (MVRF…LQGF) and 129–158 (VKEEESQDTQNTLDVSSSTSSTLATSGNAR). Residues 1–381 (MVRFFGLNKK…YCVKDYIKKA (381 aa)) constitute a propeptide that is removed on maturation. The segment covering 24 to 38 (NEQNAAETSSSNVSG) has biased composition (polar residues). Residues 39–51 (NEERIDPNSHDAN) show a composition bias toward basic and acidic residues. Over residues 52–78 (PENANNDDASTTFGSSIQSSSIFSRGR) the composition is skewed to low complexity. Residues 83–93 (TGASSSMATSE) are compositionally biased toward polar residues. 2 stretches are compositionally biased toward low complexity: residues 97–109 (HSSGHSGSKNSKN) and 144–154 (SSSTSSTLATS). The serine protease stretch occupies residues 459–699 (FAITCAHVVL…QWDIDPQLDG (241 aa)). Active-site charge relay system residues include His-465, Asp-545, and Ser-640.

The protein belongs to the peptidase S64 family. As to quaternary structure, component of the plasma membrane SPS (SSY1-PTR3-SSY5) amino acid sensor complex. The propeptide is autoproteolytically cleaved from the catalytic domain but remains associated, forming an inactive protease complex. This processing occurs even in the absence of signaling.

It is found in the cell membrane. Protease component of the SPS-sensor system, which regulates the expression of several amino acid-metabolizing enzymes and amino acid- and peptide-permeases in response to extracellular amino acid levels by controlling the activity of two transcription factors, STP1 and STP2. Catalyzes the activation of these transcription factors, which are synthesized as latent cytoplasmic precursors, by proteolytic removal of an N-terminal inhibitory domain containing cytoplasmic retention motifs. SSY5 binds as an inactive protease complex to STP1. In response to extracellular amino acids and dependent on the other SPS-sensor components, the inhibitory propeptide is induced to dissociate, and thereby enables the catalytic domain to process STP1. This Saccharomyces cerevisiae (strain YJM789) (Baker's yeast) protein is SPS-sensor serine protease component SSY5 (SSY5).